The following is a 327-amino-acid chain: Methionyl-tRNA formyltransferase (327 aa).

Serine 122–proline 125 provides a ligand contact to (6S)-5,6,7,8-tetrahydrofolate.

It belongs to the Fmt family.

It catalyses the reaction L-methionyl-tRNA(fMet) + (6R)-10-formyltetrahydrofolate = N-formyl-L-methionyl-tRNA(fMet) + (6S)-5,6,7,8-tetrahydrofolate + H(+). Its function is as follows. Attaches a formyl group to the free amino group of methionyl-tRNA(fMet). The formyl group appears to play a dual role in the initiator identity of N-formylmethionyl-tRNA by promoting its recognition by IF2 and preventing the misappropriation of this tRNA by the elongation apparatus. The polypeptide is Methionyl-tRNA formyltransferase (Ralstonia pickettii (strain 12J)).